The primary structure comprises 122 residues: MARIAGVNIPTNKRVVIALQYIHGIGPKKAEEITEKVGIPAERRVNQLTDAEVLQIREAIDRDYVVEGDLRREVAMNIKRLMDLGCYRGLRHRRNLPVRGQRTHTNARTRKGKAKPIAGKKK.

Positions 95-122 (NLPVRGQRTHTNARTRKGKAKPIAGKKK) are disordered.

It belongs to the universal ribosomal protein uS13 family. As to quaternary structure, part of the 30S ribosomal subunit. Forms a loose heterodimer with protein S19. Forms two bridges to the 50S subunit in the 70S ribosome.

In terms of biological role, located at the top of the head of the 30S subunit, it contacts several helices of the 16S rRNA. In the 70S ribosome it contacts the 23S rRNA (bridge B1a) and protein L5 of the 50S subunit (bridge B1b), connecting the 2 subunits; these bridges are implicated in subunit movement. Contacts the tRNAs in the A and P-sites. The sequence is that of Small ribosomal subunit protein uS13 from Methylobacterium sp. (strain 4-46).